A 427-amino-acid polypeptide reads, in one-letter code: Lactadherin (427 aa).

Residues 1–22 (MQFSRVLAALCGVLLCASGLFA) form the signal peptide. EGF-like domains follow at residues 24–61 (SGDF…LVCN) and 64–108 (EKGP…IHCE). Disulfide bonds link Cys28/Cys39, Cys33/Cys49, and Cys51/Cys60. N-linked (GlcNAc...) asparagine glycosylation occurs at Asn61. 6 disulfide bridges follow: Cys68–Cys79, Cys73–Cys96, Cys98–Cys107, Cys111–Cys267, Cys254–Cys258, and Cys272–Cys427. The Cell attachment site signature appears at 87 to 89 (RGD). 2 F5/8 type C domains span residues 111–267 (CSTK…LLGC) and 272–427 (CSEP…LLGC). Residue Asn230 is glycosylated (N-linked (GlcNAc...) asparagine). N-linked (GlcNAc...) asparagine glycosylation is found at Asn280 and Asn390.

Spleen, lung, heart, brain and muscle.

It is found in the membrane. Its subcellular location is the secreted. It localises to the cytoplasmic vesicle. The protein resides in the secretory vesicle. The protein localises to the acrosome membrane. In terms of biological role, contributes to phagocytic removal of apoptotic cells in many tissues. Plays an important role in the maintenance of intestinal epithelial homeostasis and the promotion of mucosal healing. Promotes VEGF-dependent neovascularization. Specific ligand for the alpha-v/beta-3 and alpha-v/beta-5 receptors. Also binds to phosphatidylserine-enriched cell surfaces in a receptor-independent manner. Zona pellucida-binding protein which may play a role in gamete interaction. Appears to participate in the O-acetylation of GD3 ganglioside sialic acid. In Rattus norvegicus (Rat), this protein is Lactadherin (Mfge8).